The primary structure comprises 166 residues: Transmembrane protein 278 (166 aa).

Residues 1–15 (MSDQERETEEDEGGD) show a composition bias toward acidic residues. Residues 1–28 (MSDQERETEEDEGGDPSDTAPMLPQRLP) are disordered. 3 helical membrane passes run 39–59 (GWAS…WALA), 65–85 (LLLP…VVYL), and 111–131 (AAVI…ASAA).

The protein belongs to the TMEM88 family.

The protein localises to the membrane. The protein is Transmembrane protein 278 (TMEM278) of Bos taurus (Bovine).